We begin with the raw amino-acid sequence, 1598 residues long: Mushroom body large-type Kenyon cell-specific protein 1 (1598 aa).

Disordered regions lie at residues 83-105 (PGNL…SLPA), 140-387 (RHHH…SDGI), 436-462 (PHDD…PMSV), and 495-525 (PLVG…SQDN). Basic residues predominate over residues 140 to 151 (RHHHLQNHHHHL). The segment covering 164–174 (QQQQQQQQRQQ) has biased composition (low complexity). Residues 175–191 (QRQEERRLRPDEIKVEV) show a composition bias toward basic and acidic residues. The segment covering 210-263 (STDASTPATVTTTGATTTLPAASATGTGPATPSAVVATSNATAAMTTGTTTIPT) has biased composition (low complexity). Over residues 275 to 291 (EGADDRDDDEENEEEED) the composition is skewed to acidic residues. Basic and acidic residues-rich tracts occupy residues 292–305 (GRGQ…LKLD), 315–324 (LRREKDRGSR), and 335–346 (DGTKERTEEVAL). Ser-444 carries the phosphoserine; by MAPK modification. Residues 445–461 (PQSDSSSSSRSAESPMS) show a composition bias toward low complexity. Residues 582 to 634 (VGAGGGRRAYTEEELQAALRDIQSGKLGTRRAAVIYGIPRSTLRNKVYKLAME) enclose the HTH psq-type 1 domain. A DNA-binding region (H-T-H motif) is located at residues 610–630 (TRRAAVIYGIPRSTLRNKVYK). Disordered stretches follow at residues 636 to 705 (ERDA…SGAE), 797 to 877 (RLSK…DSAQ), 962 to 1045 (GQTV…NYDR), 1082 to 1145 (ERHL…NGIK), 1248 to 1283 (ETSA…NGSF), and 1301 to 1598 (RAMT…SVEQ). The segment covering 653–687 (APATTITTITTTTTTTTTTTTTTTTPNTTQNASAT) has biased composition (low complexity). Acidic residues predominate over residues 694–705 (DEVDDKELSGAE). The segment covering 820–855 (THPQAQAQAQPQQQQQQQQQQPQQQQQQQQQQQQQQ) has biased composition (low complexity). The span at 965 to 975 (VSGGGMGGCQP) shows a compositional bias: gly residues. The span at 1003-1021 (ANAQQGQAQAQAKPQSQEA) shows a compositional bias: low complexity. An HTH psq-type 2 domain is found at 1034 to 1086 (RPKRGKYRNYDRDSLVEAVRAVQRGEMSVHRAGSYYGVPHSTLEYKVKERHLM). Positions 1062 to 1082 (VHRAGSYYGVPHSTLEYKVKE) form a DNA-binding region, H-T-H motif. A compositionally biased stretch (basic and acidic residues) spans 1093–1102 (QKQSDDKTKE). Residues 1103–1120 (TSTVTAAAAATNIRPGTA) show a composition bias toward low complexity. Positions 1309 to 1318 (QQQQASSQQQ) are enriched in low complexity. Basic and acidic residues-rich tracts occupy residues 1383-1392 (DRGRNDDGSD) and 1407-1442 (GSRD…DRKT). The span at 1447–1466 (PQQPQQQQQQQQQQQQQQQQ) shows a compositional bias: low complexity. Positions 1481–1497 (TDKKSACDSKLIVDHSS) are enriched in basic and acidic residues. The span at 1501–1547 (QQQQPQQQQQQQQQQQPQQQSQQPQQQQPQPQQQQQQQQQQQPQQQQ) shows a compositional bias: low complexity. Over residues 1562-1577 (RGYNSGNNRSGEQANS) the composition is skewed to polar residues.

In terms of assembly, homodimer. In terms of tissue distribution, large-type Kenyon cells of mushroom body.

It is found in the nucleus. Its function is as follows. Transcriptional activator which binds to the consensus sequence 5'-CCCTATCGATCGATCTCTACCT-3'. May play a role in higher-order sensory processing. This chain is Mushroom body large-type Kenyon cell-specific protein 1 (Mblk-1), found in Apis mellifera (Honeybee).